A 298-amino-acid chain; its full sequence is Bifunctional protein FolD (298 aa).

NADP(+) is bound by residues G165–S167, S190, and I231.

It belongs to the tetrahydrofolate dehydrogenase/cyclohydrolase family. In terms of assembly, homodimer.

The enzyme catalyses (6R)-5,10-methylene-5,6,7,8-tetrahydrofolate + NADP(+) = (6R)-5,10-methenyltetrahydrofolate + NADPH. It catalyses the reaction (6R)-5,10-methenyltetrahydrofolate + H2O = (6R)-10-formyltetrahydrofolate + H(+). It participates in one-carbon metabolism; tetrahydrofolate interconversion. Catalyzes the oxidation of 5,10-methylenetetrahydrofolate to 5,10-methenyltetrahydrofolate and then the hydrolysis of 5,10-methenyltetrahydrofolate to 10-formyltetrahydrofolate. The sequence is that of Bifunctional protein FolD from Prochlorococcus marinus (strain MIT 9301).